The chain runs to 437 residues: Sulfite reductase, dissimilatory-type subunit alpha (437 aa).

Residues Cys-177, Cys-183, Cys-221, Cys-225, Cys-284, Cys-303, Cys-306, and Cys-309 each coordinate [4Fe-4S] cluster. The 29-residue stretch at 294–322 folds into the 4Fe-4S ferredoxin-type domain; sequence SKLSIDNKECVRCMHCINTMPRALHIGDE.

As to quaternary structure, heterohexamer of two alpha, two beta and two gamma subunits.

In terms of biological role, part of the complex that catalyzes the reduction of sulfite to sulfide. The alpha and beta subunits may have arisen by gene duplication. They both bind 2 iron-sulfur clusters, but the alpha subunit seems to be catalytically inactive, due to substitutions along the putative substrate access channel, and because it binds sirohydrochlorin (the dematallated form of siroheme) instead of siroheme. This is Sulfite reductase, dissimilatory-type subunit alpha (dsvA) from Nitratidesulfovibrio vulgaris (strain ATCC 29579 / DSM 644 / CCUG 34227 / NCIMB 8303 / VKM B-1760 / Hildenborough) (Desulfovibrio vulgaris).